We begin with the raw amino-acid sequence, 186 residues long: Tumor necrosis factor alpha-induced protein 8-like protein 1 (186 aa).

The protein belongs to the TNFAIP8 family. As to quaternary structure, interacts with FBXW5; TNFAIP8L1 competes with TSC2 to bind FBXW5 increasing TSC2 stability by preventing its ubiquitination.

It localises to the cytoplasm. Functionally, acts as a negative regulator of mTOR activity. In Bos taurus (Bovine), this protein is Tumor necrosis factor alpha-induced protein 8-like protein 1 (TNFAIP8L1).